The primary structure comprises 706 residues: Termination factor NPH-I homolog (706 aa).

Positions 62 to 227 constitute a Helicase ATP-binding domain; that stretch reads IGQGENTRGL…VPCFNMLSGR (166 aa). An ATP-binding site is contributed by 75–82; sequence HQMGMGKT. A DEAH box motif is present at residues 168 to 171; it reads DEAH. A Helicase C-terminal domain is found at 378–599; that stretch reads KIVCMLKNIK…HLNSAFRDLL (222 aa).

The protein belongs to the DEAD box helicase family. DEAH subfamily. Part of the viral DNA-directed RNA polymerase that consists of 8 polII-like subunits (RPB1, RPB2, RPB3, RPB5, RPB6, RPB7, RPB9, RPB10), a capping enzyme and a termination factor.

It localises to the virion. Putative DNA-dependent ATPase required for providing the needed energy to achieve the termination of early transcripts. This African swine fever virus (isolate Pig/Kenya/KEN-50/1950) (ASFV) protein is Termination factor NPH-I homolog.